Reading from the N-terminus, the 307-residue chain is MTSKLKRVAVAQLCSSADLTKNLKVVKELISEAIQKKADVVFLPEASDYLSQNPLHSRYLAQKSPKFIRQLQSSITDLVRDNSRNIDVSIGVHLPPSEQDLLEGNDRVRNVLLYIDHEGKILQEYQKLHLFDVDVPNGPILKESKSVQPGKAIPDIIESPLGKLGSAICYDIRFPEFSLKLRSMGAEILCFPSAFTIKTGEAHWELLGRARAVDTQCYVLMPGQVGMHDLSDPEWEKQSHMSALEKSSRRESWGHSMVIDPWGKIIAHADPSTVGPQLILADLDRELLQEIRNKMPLWNQRRDDLFH.

The region spanning 6-285 is the CN hydrolase domain; sequence KRVAVAQLCS…PQLILADLDR (280 aa). The active-site Proton acceptor is E45. K127 (proton donor) is an active-site residue. Residue C169 is the Nucleophile of the active site. Substrate-binding residues include R173 and T199.

Belongs to the carbon-nitrogen hydrolase superfamily. NIT1/NIT2 family. Homodimer.

Its subcellular location is the cytoplasm. It is found in the mitochondrion. It catalyses the reaction N-(4-oxoglutaryl)-L-cysteinylglycine + H2O = L-cysteinylglycine + 2-oxoglutarate. The enzyme catalyses N-(4-carboxy-4-oxobutanoyl)-L-ethylglycylglycine + H2O = N-(2-aminobutanoyl)glycine + 2-oxoglutarate. Functionally, catalyzes the hydrolysis of the amide bond in N-(4-oxoglutarate)-L-cysteinylglycine (deaminated glutathione), a metabolite repair reaction to dispose of the harmful deaminated glutathione. Possesses amidase activity toward deaminated ophthalmate in vitro. This chain is Deaminated glutathione amidase (NIT2), found in Saccharomyces cerevisiae (strain ATCC 204508 / S288c) (Baker's yeast).